The primary structure comprises 108 residues: PTS system cellobiose-specific EIIB component (108 aa).

The 106-residue stretch at 3–108 (DKVIALACAA…VLAAAENLMN (106 aa)) folds into the PTS EIIB type-3 domain. C10 serves as the catalytic Phosphocysteine intermediate. At C10 the chain carries Phosphocysteine; by EIIA.

The catalysed reaction is D-cellobiose(out) + N(pros)-phospho-L-histidyl-[protein] = 6-phospho-beta-D-glucosyl-(1-&gt;4)-D-glucose(in) + L-histidyl-[protein]. Functionally, the phosphoenolpyruvate-dependent sugar phosphotransferase system (sugar PTS), a major carbohydrate active transport system, catalyzes the phosphorylation of incoming sugar substrates concomitantly with their translocation across the cell membrane. Involved in cellobiose transport with PtcA and CelB. This system can also transport lactose. In Lactococcus lactis subsp. lactis (strain IL1403) (Streptococcus lactis), this protein is PTS system cellobiose-specific EIIB component.